Consider the following 505-residue polypeptide: Cyclic AMP-dependent transcription factor ATF-2 (505 aa).

Residues 1 to 7 carry the Nuclear export signal 1 (N-NES) motif; it reads MKFKLHV. The C2H2-type zinc finger occupies 25-49; the sequence is FLCTAPGCGQRFTNEDHLAVHKHKH. Phosphothreonine; by PKC/PRKCH is present on Thr-52. Ser-62 is modified (phosphoserine; by VRK1). The residue at position 69 (Thr-69) is a Phosphothreonine; by MAPK11 and MAPK14. Thr-71 bears the Phosphothreonine; by MAPK1, MAPK3, MAPK11, MAPK12, MAPK14 and PLK3 mark. Thr-73 is modified (phosphothreonine; by VRK1). Phosphoserine occurs at positions 90 and 112. At Thr-116 the chain carries Phosphothreonine. At Ser-121 the chain carries Phosphoserine; by PKC/PRKCA and PKC/PRKCB. 2 disordered regions span residues 125 to 155 and 259 to 373; these read EPSVVETTHQDSPLPHPESTTSDEKEVPLAQ and PGIP…RQKR. Ser-136 is modified (phosphoserine). Positions 282-293 are enriched in polar residues; it reads LTQQHPPVTNGD. Positions 296–299 are essential for its histone acetyltransferase activity; sequence KGHG. The span at 318–334 shows a compositional bias: low complexity; that stretch reads PATSTTETPASPAHTTP. Residue Ser-328 is modified to Phosphoserine. Phosphoserine; by PKC/PRKCA and PKC/PRKCB is present on Ser-340. The segment covering 346–363 has biased composition (basic and acidic residues); the sequence is AANEDPDEKRRKFLERNR. In terms of domain architecture, bZIP spans 352-415; it reads DEKRRKFLER…AQLKQLLLAH (64 aa). Positions 354 to 374 are basic motif; that stretch reads KRRKFLERNRAAASRCRQKRK. Position 357 is an N6-acetyllysine (Lys-357). A Phosphoserine; by PKC/PRKCA and PKC/PRKCB modification is found at Ser-367. Lys-374 carries the post-translational modification N6-acetyllysine. Residues 380–408 are leucine-zipper; it reads LEKKAEDLSSLNGQLQSEVTLLRNEVAQL. The short motif at 405–414 is the Nuclear export signal 2 (C-NES) element; it reads VAQLKQLLLA. The segment at 425–472 is disordered; it reads KKSGYHTADKDDSSEDISVPSSPHTEAIQHSSVSTSNGVSSTSKAEAV. Ser-442 and Ser-446 each carry phosphoserine. A compositionally biased stretch (polar residues) spans 443 to 454; it reads VPSSPHTEAIQH. Residues 455 to 467 show a composition bias toward low complexity; sequence SSVSTSNGVSSTS. Phosphoserine; by ATM occurs at positions 490 and 498.

Belongs to the bZIP family. ATF subfamily. Binds DNA as a dimer and can form a homodimer in the absence of DNA. Can form a heterodimer with JUN. Heterodimerization is essential for its transcriptional activity. Interacts with SMAD3 and SMAD4. Binds through its N-terminal region to UTF1 which acts as a coactivator of ATF2 transcriptional activity. Interacts with the HK1/VDAC1 complex. Interacts with NBN, MRE11, XPO1, KAT5 and CUL3. Post-translationally, phosphorylation of Thr-69 by MAPK14 and MAPK11, and at Thr-71 by MAPK1/ERK2, MAPK3/ERK1, MAPK11, MAPK12 and MAPK14 in response to external stimulus like insulin causes increased transcriptional activity. Phosphorylated by PLK3 following hyperosmotic stress. Also phosphorylated and activated by JNK and CaMK4. ATM-mediated phosphorylation at Ser-490 and Ser-498 stimulates its function in DNA damage response. Phosphorylation at Ser-62, Thr-73 and Ser-121 activates its transcriptional activity. Phosphorylation at Thr-69 or Thr-71 enhances acetylation of histones H2B and H4. In terms of tissue distribution, ubiquitously expressed, with more abundant expression in the brain.

Its subcellular location is the nucleus. The protein localises to the cytoplasm. It localises to the mitochondrion outer membrane. Its function is as follows. Transcriptional activator which regulates the transcription of various genes, including those involved in anti-apoptosis, cell growth, and DNA damage response. Dependent on its binding partner, binds to CRE (cAMP response element) consensus sequences (5'-TGACGTCA-3') or to AP-1 (activator protein 1) consensus sequences (5'-TGACTCA-3'). In the nucleus, contributes to global transcription and the DNA damage response, in addition to specific transcriptional activities that are related to cell development, proliferation and death. In the cytoplasm, interacts with and perturbs HK1- and VDAC1-containing complexes at the mitochondrial outer membrane, thereby impairing mitochondrial membrane potential, inducing mitochondrial leakage and promoting cell death. The phosphorylated form (mediated by ATM) plays a role in the DNA damage response and is involved in the ionizing radiation (IR)-induced S phase checkpoint control and in the recruitment of the MRN complex into the IR-induced foci (IRIF). Exhibits histone acetyltransferase (HAT) activity which specifically acetylates histones H2B and H4 in vitro. In concert with CUL3 and RBX1, promotes the degradation of KAT5 thereby attenuating its ability to acetylate and activate ATM. Can elicit oncogenic or tumor suppressor activities depending on the tissue or cell type. This chain is Cyclic AMP-dependent transcription factor ATF-2 (ATF2), found in Homo sapiens (Human).